The sequence spans 275 residues: NH(3)-dependent NAD(+) synthetase (275 aa).

46-53 (GISGGQDS) is an ATP binding site. Aspartate 52 serves as a coordination point for Mg(2+). Position 140 (arginine 140) interacts with deamido-NAD(+). Threonine 160 lines the ATP pocket. Glutamate 165 contributes to the Mg(2+) binding site. Deamido-NAD(+) is bound by residues lysine 173 and aspartate 180. Residues lysine 189 and threonine 211 each contribute to the ATP site. 260 to 261 (HK) lines the deamido-NAD(+) pocket.

It belongs to the NAD synthetase family. As to quaternary structure, homodimer.

It catalyses the reaction deamido-NAD(+) + NH4(+) + ATP = AMP + diphosphate + NAD(+) + H(+). Its pathway is cofactor biosynthesis; NAD(+) biosynthesis; NAD(+) from deamido-NAD(+) (ammonia route): step 1/1. Its function is as follows. Catalyzes the ATP-dependent amidation of deamido-NAD to form NAD. Uses ammonia as a nitrogen source. This Escherichia coli O8 (strain IAI1) protein is NH(3)-dependent NAD(+) synthetase.